A 144-amino-acid chain; its full sequence is MKIQIINKSRHDLPNYETIASAGMDLRANIIEPITLKPLERTIVKTGLFIELPIGYEAQVRPRSGLAAKKGVTVLNSPGTVDADYRGEIGVILVNLSNEEFVIENGERIAQLIIAKHERAEWIEVEELSETSRGEGGFGSTGVK.

Substrate is bound by residues 63 to 65, N76, and 80 to 82; these read RSG and TVD.

The protein belongs to the dUTPase family. Requires Mg(2+) as cofactor.

It catalyses the reaction dUTP + H2O = dUMP + diphosphate + H(+). Its pathway is pyrimidine metabolism; dUMP biosynthesis; dUMP from dCTP (dUTP route): step 2/2. In terms of biological role, this enzyme is involved in nucleotide metabolism: it produces dUMP, the immediate precursor of thymidine nucleotides and it decreases the intracellular concentration of dUTP so that uracil cannot be incorporated into DNA. The protein is Deoxyuridine 5'-triphosphate nucleotidohydrolase of Flavobacterium johnsoniae (strain ATCC 17061 / DSM 2064 / JCM 8514 / BCRC 14874 / CCUG 350202 / NBRC 14942 / NCIMB 11054 / UW101) (Cytophaga johnsonae).